Reading from the N-terminus, the 812-residue chain is DNA gyrase subunit A (812 aa).

Residues 31–496 (IPDVRDGLKP…GNTDFNVEDV (466 aa)) form the Topo IIA-type catalytic domain. The active-site O-(5'-phospho-DNA)-tyrosine intermediate is Tyr119. The GyrA-box motif lies at 523–529 (QGRGGKG).

This sequence belongs to the type II topoisomerase GyrA/ParC subunit family. In terms of assembly, heterotetramer, composed of two GyrA and two GyrB chains. In the heterotetramer, GyrA contains the active site tyrosine that forms a transient covalent intermediate with DNA, while GyrB binds cofactors and catalyzes ATP hydrolysis.

It localises to the cytoplasm. The enzyme catalyses ATP-dependent breakage, passage and rejoining of double-stranded DNA.. A type II topoisomerase that negatively supercoils closed circular double-stranded (ds) DNA in an ATP-dependent manner to modulate DNA topology and maintain chromosomes in an underwound state. Negative supercoiling favors strand separation, and DNA replication, transcription, recombination and repair, all of which involve strand separation. Also able to catalyze the interconversion of other topological isomers of dsDNA rings, including catenanes and knotted rings. Type II topoisomerases break and join 2 DNA strands simultaneously in an ATP-dependent manner. The chain is DNA gyrase subunit A from Kosmotoga olearia (strain ATCC BAA-1733 / DSM 21960 / TBF 19.5.1).